The primary structure comprises 85 residues: Cell division topological specificity factor (85 aa).

It belongs to the MinE family.

Prevents the cell division inhibition by proteins MinC and MinD at internal division sites while permitting inhibition at polar sites. This ensures cell division at the proper site by restricting the formation of a division septum at the midpoint of the long axis of the cell. The polypeptide is Cell division topological specificity factor (Dechloromonas aromatica (strain RCB)).